Here is a 62-residue protein sequence, read N- to C-terminus: uncharacterized protein (62 aa).

Residues Met-1–Glu-13 show a composition bias toward polar residues. Residues Met-1–Gly-62 are disordered. The span at Gly-14 to Met-28 shows a compositional bias: basic and acidic residues.

This is an uncharacterized protein from Mycobacterium tuberculosis (strain ATCC 25618 / H37Rv).